A 421-amino-acid polypeptide reads, in one-letter code: BEN domain-containing protein 5 (421 aa).

The residue at position 133 (K133) is an N6-acetyllysine. Residues 180 to 243 (RALYEELLRN…LNRRLQDVLL (64 aa)) are a coiled coil. Residue K258 forms a Glycyl lysine isopeptide (Lys-Gly) (interchain with G-Cter in SUMO2) linkage. The region spanning 302–408 (GSGIWVDEEK…EKIMDINKSC (107 aa)) is the BEN domain.

Functionally, acts as a transcriptional repressor. In Mus musculus (Mouse), this protein is BEN domain-containing protein 5 (Bend5).